Here is a 404-residue protein sequence, read N- to C-terminus: Exodeoxyribonuclease 7 large subunit (404 aa).

Belongs to the XseA family. Heterooligomer composed of large and small subunits.

The protein localises to the cytoplasm. It carries out the reaction Exonucleolytic cleavage in either 5'- to 3'- or 3'- to 5'-direction to yield nucleoside 5'-phosphates.. Its function is as follows. Bidirectionally degrades single-stranded DNA into large acid-insoluble oligonucleotides, which are then degraded further into small acid-soluble oligonucleotides. This Mesoplasma florum (strain ATCC 33453 / NBRC 100688 / NCTC 11704 / L1) (Acholeplasma florum) protein is Exodeoxyribonuclease 7 large subunit.